The following is a 348-amino-acid chain: Holliday junction branch migration complex subunit RuvB (348 aa).

Positions 3–183 are large ATPase domain (RuvB-L); that stretch reads DDGLVSAAAS…FGFTAHLDFY (181 aa). Residues leucine 22, arginine 23, glycine 64, lysine 67, threonine 68, serine 69, 130–132, arginine 173, tyrosine 183, and arginine 220 contribute to the ATP site; that span reads EDF. Residue threonine 68 participates in Mg(2+) binding. A small ATPAse domain (RuvB-S) region spans residues 184-254; the sequence is DADELARVLT…IAQAALRIYD (71 aa). The interval 257–348 is head domain (RuvB-H); sequence GLGLDRLDRA…TQVSLFTEGE (92 aa). DNA-binding residues include arginine 312 and arginine 317.

The protein belongs to the RuvB family. Homohexamer. Forms an RuvA(8)-RuvB(12)-Holliday junction (HJ) complex. HJ DNA is sandwiched between 2 RuvA tetramers; dsDNA enters through RuvA and exits via RuvB. An RuvB hexamer assembles on each DNA strand where it exits the tetramer. Each RuvB hexamer is contacted by two RuvA subunits (via domain III) on 2 adjacent RuvB subunits; this complex drives branch migration. In the full resolvosome a probable DNA-RuvA(4)-RuvB(12)-RuvC(2) complex forms which resolves the HJ.

The protein resides in the cytoplasm. It catalyses the reaction ATP + H2O = ADP + phosphate + H(+). Its function is as follows. The RuvA-RuvB-RuvC complex processes Holliday junction (HJ) DNA during genetic recombination and DNA repair, while the RuvA-RuvB complex plays an important role in the rescue of blocked DNA replication forks via replication fork reversal (RFR). RuvA specifically binds to HJ cruciform DNA, conferring on it an open structure. The RuvB hexamer acts as an ATP-dependent pump, pulling dsDNA into and through the RuvAB complex. RuvB forms 2 homohexamers on either side of HJ DNA bound by 1 or 2 RuvA tetramers; 4 subunits per hexamer contact DNA at a time. Coordinated motions by a converter formed by DNA-disengaged RuvB subunits stimulates ATP hydrolysis and nucleotide exchange. Immobilization of the converter enables RuvB to convert the ATP-contained energy into a lever motion, pulling 2 nucleotides of DNA out of the RuvA tetramer per ATP hydrolyzed, thus driving DNA branch migration. The RuvB motors rotate together with the DNA substrate, which together with the progressing nucleotide cycle form the mechanistic basis for DNA recombination by continuous HJ branch migration. Branch migration allows RuvC to scan DNA until it finds its consensus sequence, where it cleaves and resolves cruciform DNA. This Frankia casuarinae (strain DSM 45818 / CECT 9043 / HFP020203 / CcI3) protein is Holliday junction branch migration complex subunit RuvB.